We begin with the raw amino-acid sequence, 129 residues long: MSYKRGTCLGFIMLLMVSHHHTKGKPLSSLQNLSRLLEDNFERSFGSDEADQQLVPTDSLDQLDPELQWNKNRLEQGDSPHVNEMTLQQLLNDPVGTSRRYRQRNKKGYSRGCFGVKLDRIGAFSGLGC.

The signal sequence occupies residues 1–24; the sequence is MSYKRGTCLGFIMLLMVSHHHTKG. A propeptide spanning residues 25–107 is cleaved from the precursor; the sequence is KPLSSLQNLS…SRRYRQRNKK (83 aa). C113 and C129 are joined by a disulfide.

The protein belongs to the natriuretic peptide family.

It is found in the secreted. Hormone which plays a role in endochondral ossification through regulation of cartilaginous growth plate chondrocytes proliferation and differentiation. May also be vasoactive and natriuretic. May be important for freshwater adaptation. The sequence is that of C-type natriuretic peptide 1 from Aquarana catesbeiana (American bullfrog).